We begin with the raw amino-acid sequence, 448 residues long: Dual specificity mitogen-activated protein kinase kinase 5 (448 aa).

Residues Val18–Asn25 form an interaction with MAPK7 region. The PB1 domain maps to Val18–Cys109. The interaction with MAP3K2/MAP3K3 stretch occupies residues Asp64–Asp68. Residues Asn116–Ser144 are disordered. The segment at Ile117–His131 is interaction with MAPK7. Over residues Ala126–Ser144 the composition is skewed to polar residues. The Protein kinase domain maps to Ile166–Ala409. ATP is bound by residues Leu172–Val180 and Lys195. The active-site Proton acceptor is Asp283. Ser311 carries the phosphoserine modification. The residue at position 315 (Thr315) is a Phosphothreonine.

The protein belongs to the protein kinase superfamily. STE Ser/Thr protein kinase family. MAP kinase kinase subfamily. In terms of assembly, interacts with PARD6A, MAP3K3 and MAPK7. Forms a complex with SQSTM1 and PRKCZ or PRKCI. (Microbial infection) Interacts with Yersinia YopJ. Mg(2+) serves as cofactor. Activated by phosphorylation on Ser/Thr by MAP kinase kinase kinases. In terms of processing, (Microbial infection) Yersinia YopJ may acetylate Ser/Thr residues, preventing phosphorylation and activation, thus blocking the MAPK signaling pathway. Expressed in many adult tissues. Abundant in heart and skeletal muscle.

The enzyme catalyses L-seryl-[protein] + ATP = O-phospho-L-seryl-[protein] + ADP + H(+). The catalysed reaction is L-threonyl-[protein] + ATP = O-phospho-L-threonyl-[protein] + ADP + H(+). It carries out the reaction L-tyrosyl-[protein] + ATP = O-phospho-L-tyrosyl-[protein] + ADP + H(+). In terms of biological role, acts as a scaffold for the formation of a ternary MAP3K2/MAP3K3-MAP3K5-MAPK7 signaling complex. Activation of this pathway appears to play a critical role in protecting cells from stress-induced apoptosis, neuronal survival and cardiac development and angiogenesis. As part of the MAPK/ERK signaling pathway, acts as a negative regulator of apoptosis in cardiomyocytes via promotion of STUB1/CHIP-mediated ubiquitination and degradation of ICER-type isoforms of CREM. The polypeptide is Dual specificity mitogen-activated protein kinase kinase 5 (MAP2K5) (Homo sapiens (Human)).